The sequence spans 195 residues: Imidazoleglycerol-phosphate dehydratase (195 aa).

Belongs to the imidazoleglycerol-phosphate dehydratase family.

Its subcellular location is the cytoplasm. It catalyses the reaction D-erythro-1-(imidazol-4-yl)glycerol 3-phosphate = 3-(imidazol-4-yl)-2-oxopropyl phosphate + H2O. Its pathway is amino-acid biosynthesis; L-histidine biosynthesis; L-histidine from 5-phospho-alpha-D-ribose 1-diphosphate: step 6/9. This is Imidazoleglycerol-phosphate dehydratase from Haloarcula marismortui (strain ATCC 43049 / DSM 3752 / JCM 8966 / VKM B-1809) (Halobacterium marismortui).